A 350-amino-acid polypeptide reads, in one-letter code: METVESSSSAELLRAQTHFSRQVFSFQNFAALKCALQLGIPDAIKQHGKPMNLSELTSALPINPSKAPCIHRLMRLLVNAGYFAQENECFALTSLGRLLLKDDPLHIRALVLSEFHTALVMPWFALSEWFKNDDVAPFATAHGKSFWDYTSCDPELRNVFDGAMACDSHLIAKALVTEFKYLFEGLKSLVDVGGGNGTLARSIAKAFTNLKCTVCDLPEAVANEQGDGNLDFVAGDMFDRVPSADAILLKSILHDWSDENCVKILKNCKRAISGKDKGGKVIVIDGVVELQKKAGNDDPGLDNMDMQMLVLFNSKERNEKEWAKLFSDAGFSDYGIVRTFGWWCIMELSP.

S-adenosyl-L-methionine is bound by residues G193, D216, D236, M237, and K250. The active-site Proton acceptor is the H254.

Belongs to the class I-like SAM-binding methyltransferase superfamily. Cation-independent O-methyltransferase family. As to expression, expressed in roots.

Its subcellular location is the cytoplasm. The protein localises to the cytosol. It catalyses the reaction cephaeline + S-adenosyl-L-methionine = emetine + S-adenosyl-L-homocysteine + H(+). The catalysed reaction is deacetylisoipecoside + S-adenosyl-L-methionine = 6-O-methyldeacetylisoipecoside + S-adenosyl-L-homocysteine + H(+). The enzyme catalyses 7-O-methyldeacetylisoipecoside + S-adenosyl-L-methionine = 6,7-O,O-dimethyldeacetylisoipecoside + S-adenosyl-L-homocysteine + H(+). It carries out the reaction norcoclaurine + S-adenosyl-L-methionine = coclaurine + S-adenosyl-L-homocysteine + H(+). It catalyses the reaction (S)-norprotosinomenine + S-adenosyl-L-methionine = (S)-6-O-methylnorprotosinomenine + S-adenosyl-L-homocysteine + H(+). The catalysed reaction is (R)-norprotosinomenine + S-adenosyl-L-methionine = (R)-6-O-methylnorprotosinomenine + S-adenosyl-L-homocysteine + H(+). It participates in alkaloid biosynthesis. In terms of biological role, O-methyltransferase involved in the biosynthesis of ipecac and benzylisoquinoline monoterpenoid-isoquinoline alkaloids natural products, starting by the condensation of dopamine and secologanin, and including emetine and cephaeline, drugs used both as anti-protozoal (e.g. treatment of ameobiasis) and as emetic agents. Mediates cephaeline 6'-O-methylation to produce emetine. Catalyzes the 6-O-methylation of N-deacetylisoipecoside, 7-O-methyl-N-deacetylisoipecoside, isococlaurine, norcoclaurine, (S)-norprotosinomenine and (R)-norprotosinomenine, and, with a lower efficiency, of 4'-O-methyllaudanosoline, isoorientaline and protosinomenine. Supports also the 4'-O-methylation of nororientaline. The sequence is that of Cephaeline 6'-O-methyltransferase IpeOMT1 from Carapichea ipecacuanha (Ipecac).